The chain runs to 246 residues: E3 ubiquitin-protein ligase MARCHF2 (246 aa).

The RING-CH-type zinc finger occupies Gly-56–Glu-116. Zn(2+) contacts are provided by Cys-64, Cys-67, Cys-80, Cys-82, His-90, Cys-93, Cys-106, and Cys-109. 2 consecutive transmembrane segments (helical) span residues Leu-138–Leu-158 and Ala-175–Val-195.

It is found in the endoplasmic reticulum membrane. The protein resides in the lysosome membrane. The protein localises to the endosome membrane. It carries out the reaction S-ubiquitinyl-[E2 ubiquitin-conjugating enzyme]-L-cysteine + [acceptor protein]-L-lysine = [E2 ubiquitin-conjugating enzyme]-L-cysteine + N(6)-ubiquitinyl-[acceptor protein]-L-lysine.. The protein operates within protein modification; protein ubiquitination. Functionally, E3 ubiquitin-protein ligase which may be involved in endosomal trafficking. E3 ubiquitin ligases accept ubiquitin from an E2 ubiquitin-conjugating enzyme in the form of a thioester and then directly transfer the ubiquitin to targeted substrates. This Xenopus tropicalis (Western clawed frog) protein is E3 ubiquitin-protein ligase MARCHF2 (marchf2).